Reading from the N-terminus, the 198-residue chain is Small ribosomal subunit protein uS4 (198 aa).

The segment at 26 to 45 (LKKRPYAPGQHGQRRSKLSN) is disordered. The 64-residue stretch at 91–154 (SRLDNVVYRL…KNLTIVKEAL (64 aa)) folds into the S4 RNA-binding domain.

It belongs to the universal ribosomal protein uS4 family. As to quaternary structure, part of the 30S ribosomal subunit. Contacts protein S5. The interaction surface between S4 and S5 is involved in control of translational fidelity.

One of the primary rRNA binding proteins, it binds directly to 16S rRNA where it nucleates assembly of the body of the 30S subunit. Its function is as follows. With S5 and S12 plays an important role in translational accuracy. The protein is Small ribosomal subunit protein uS4 of Acholeplasma laidlawii (strain PG-8A).